The sequence spans 345 residues: Ryncolin-1 (345 aa).

A signal peptide spans 1–19 (MKPWAAFHLIFLVASSLEG). The interval 48–118 (ILQSQPGIPG…DKGDKGEDCN (71 aa)) is disordered. One can recognise a Collagen-like domain in the interval 57–114 (GIPGVPGTNGSEGLKGDPGPQGPPGIRGPDGIRGEAGPKGDKGDQGDKGDKGDKGDKG). Basic and acidic residues predominate over residues 86–116 (DGIRGEAGPKGDKGDQGDKGDKGDKGDKGED). The Fibrinogen C-terminal domain occupies 121–339 (GCLPTEVRNC…YADMKIRPQQ (219 aa)). 2 cysteine pairs are disulfide-bonded: cysteine 130/cysteine 158 and cysteine 282/cysteine 295.

This sequence belongs to the ficolin lectin family. Veficolin subfamily. Hydroxylated, possibly at Pro-80. Expressed by the venom duct.

Its subcellular location is the secreted. In terms of biological role, initiates complement activation and/or interferes in platelet aggregation and/or blood coagulation. In Cerberus rynchops (Dog-faced water snake), this protein is Ryncolin-1.